We begin with the raw amino-acid sequence, 107 residues long: Small integral membrane protein 19 (107 aa).

The chain crosses the membrane as a helical span at residues 25–43 (ATNVYLIVILVSFGLFMYA).

The protein belongs to the SMIM19 family.

Its subcellular location is the membrane. In Homo sapiens (Human), this protein is Small integral membrane protein 19 (SMIM19).